The primary structure comprises 138 residues: uncharacterized protein (138 aa).

This is an uncharacterized protein from Schizosaccharomyces pombe (strain 972 / ATCC 24843) (Fission yeast).